A 128-amino-acid chain; its full sequence is Prokineticin-2 (128 aa).

A signal peptide spans 1-26; it reads MGDPRCAPLLLLLLLPLLFTPPAGDA. Disulfide bonds link Cys33-Cys45, Cys39-Cys57, Cys44-Cys106, Cys67-Cys114, and Cys108-Cys124.

The protein belongs to the AVIT (prokineticin) family. As to expression, expressed in the SCN and among a few other discrete brain areas, including the islands of Calleja, media l preoptic area of the hypothalamus and the shell of the nucleus accumbens. Highly expressed in testis. In the SCN, expression subjected to high amplitude of circadian oscillation.

The protein localises to the secreted. Functionally, may function as an output molecule from the suprachiasmatic nucleus (SCN) that transmits behavioral circadian rhythm. May also function locally within the SCN to synchronize output. Potently contracts gastrointestinal (GI) smooth muscle. The chain is Prokineticin-2 (Prok2) from Mus musculus (Mouse).